The sequence spans 74 residues: Small, acid-soluble spore protein Tlp (74 aa).

The interval 38 to 74 is disordered; sequence AEELSSKEKDELSSKNERRKESVDGLRSEIKDEADSQ.

Belongs to the Tlp family.

Its subcellular location is the spore core. The chain is Small, acid-soluble spore protein Tlp from Oceanobacillus iheyensis (strain DSM 14371 / CIP 107618 / JCM 11309 / KCTC 3954 / HTE831).